Consider the following 218-residue polypeptide: LexA repressor (218 aa).

A DNA-binding region (H-T-H motif) is located at residues 28-48; sequence RAEIAAEFGFSSPNAAEEHLR. Residues S136 and K173 each act as for autocatalytic cleavage activity in the active site.

This sequence belongs to the peptidase S24 family. As to quaternary structure, homodimer.

It catalyses the reaction Hydrolysis of Ala-|-Gly bond in repressor LexA.. Functionally, represses a number of genes involved in the response to DNA damage (SOS response), including recA and lexA. In the presence of single-stranded DNA, RecA interacts with LexA causing an autocatalytic cleavage which disrupts the DNA-binding part of LexA, leading to derepression of the SOS regulon and eventually DNA repair. This Cupriavidus pinatubonensis (strain JMP 134 / LMG 1197) (Cupriavidus necator (strain JMP 134)) protein is LexA repressor.